The primary structure comprises 301 residues: Formylmethanofuran--tetrahydromethanopterin formyltransferase-like protein (301 aa).

The protein belongs to the FTR family.

This chain is Formylmethanofuran--tetrahydromethanopterin formyltransferase-like protein, found in Archaeoglobus fulgidus (strain ATCC 49558 / DSM 4304 / JCM 9628 / NBRC 100126 / VC-16).